A 384-amino-acid chain; its full sequence is Glutamate 5-kinase (384 aa).

Position 24 (K24) interacts with ATP. Residues S64, D149, and N161 each coordinate substrate. Residues 181–182 (TD) and 223–229 (TGGMRTK) contribute to the ATP site. Positions 288 to 370 (PGAILIDAGA…RDIQTLLGYT (83 aa)) constitute a PUA domain.

Belongs to the glutamate 5-kinase family.

The protein resides in the cytoplasm. The catalysed reaction is L-glutamate + ATP = L-glutamyl 5-phosphate + ADP. The protein operates within amino-acid biosynthesis; L-proline biosynthesis; L-glutamate 5-semialdehyde from L-glutamate: step 1/2. In terms of biological role, catalyzes the transfer of a phosphate group to glutamate to form L-glutamate 5-phosphate. The chain is Glutamate 5-kinase from Xylella fastidiosa (strain M12).